The chain runs to 205 residues: Probable nicotinate-nucleotide adenylyltransferase (205 aa).

The protein belongs to the NadD family.

It carries out the reaction nicotinate beta-D-ribonucleotide + ATP + H(+) = deamido-NAD(+) + diphosphate. Its pathway is cofactor biosynthesis; NAD(+) biosynthesis; deamido-NAD(+) from nicotinate D-ribonucleotide: step 1/1. Its function is as follows. Catalyzes the reversible adenylation of nicotinate mononucleotide (NaMN) to nicotinic acid adenine dinucleotide (NaAD). The chain is Probable nicotinate-nucleotide adenylyltransferase from Arthrobacter sp. (strain FB24).